The primary structure comprises 326 residues: tRNA-modifying protein YgfZ (326 aa).

Residues W27 and W189 each coordinate folate.

This sequence belongs to the tRNA-modifying YgfZ family.

It localises to the cytoplasm. Its function is as follows. Folate-binding protein involved in regulating the level of ATP-DnaA and in the modification of some tRNAs. It is probably a key factor in regulatory networks that act via tRNA modification, such as initiation of chromosomal replication. The sequence is that of tRNA-modifying protein YgfZ from Escherichia coli O45:K1 (strain S88 / ExPEC).